Here is a 241-residue protein sequence, read N- to C-terminus: MNRCWALFLSLCCYLRLVSAEGDPIPEELYEMLSDHSIRSFDDLQRLLHGDPGEEDGAELDLNMTRSHSGGELESLARGRRSLGSLTIAEPAMIAECKTRTEVFEISRRLIDRTNANFLVWPPCVEVQRCSGCCNNRNVQCRPTQVQLRPVQVRKIEIVRKKPIFKKATVTLEDHLACKCETVAAARPVTRSPGGSQEQRAKTPQTRVTIRTVRVRRPPKGKHRKFKHTHDKTALKETLGA.

Residues 1–20 form the signal peptide; it reads MNRCWALFLSLCCYLRLVSA. Residues 21–81 constitute a propeptide, removed in mature form; that stretch reads EGDPIPEELY…ELESLARGRR (61 aa). N63 is a glycosylation site (N-linked (GlcNAc...) asparagine). 3 cysteine pairs are disulfide-bonded: C97–C141, C130–C178, and C134–C180. Residues 191-241 constitute a propeptide, removed in mature form; the sequence is RSPGGSQEQRAKTPQTRVTIRTVRVRRPPKGKHRKFKHTHDKTALKETLGA. Over residues 216-230 the composition is skewed to basic residues; that stretch reads RRPPKGKHRKFKHTH. The segment at 216 to 241 is disordered; the sequence is RRPPKGKHRKFKHTHDKTALKETLGA.

The protein belongs to the PDGF/VEGF growth factor family. In terms of assembly, antiparallel homodimer; disulfide-linked. Antiparallel heterodimer with PDGFA; disulfide-linked. The PDGFB homodimer interacts with PDGFRA and PDGFRB homodimers, and with heterodimers formed by PDGFRA and PDGFRB. The heterodimer composed of PDGFA and PDGFB interacts with PDGFRB homodimers, and with heterodimers formed by PDGFRA and PDGFRB. Interacts with XLKD1. Interacts with LRP1. Interacts with SORL1 (via the N-terminal ectodomain). Interacts with CD82; this interaction inhibits PDGFB-mediated signaling pathway. Expressed at high levels in the heart, brain (sustantia nigra), placenta and fetal kidney. Expressed at moderate levels in the brain (hippocampus), skeletal muscle, kidney and lung.

Its subcellular location is the secreted. Functionally, growth factor that plays an essential role in the regulation of embryonic development, cell proliferation, cell migration, survival and chemotaxis. Potent mitogen for cells of mesenchymal origin. Required for normal proliferation and recruitment of pericytes and vascular smooth muscle cells in the central nervous system, skin, lung, heart and placenta. Required for normal blood vessel development, and for normal development of kidney glomeruli. Plays an important role in wound healing. Signaling is modulated by the formation of heterodimers with PDGFA. This is Platelet-derived growth factor subunit B (PDGFB) from Homo sapiens (Human).